A 100-amino-acid chain; its full sequence is Nucleoid-associated protein HPG27_32 (100 aa).

This sequence belongs to the YbaB/EbfC family. As to quaternary structure, homodimer.

The protein localises to the cytoplasm. It localises to the nucleoid. Functionally, binds to DNA and alters its conformation. May be involved in regulation of gene expression, nucleoid organization and DNA protection. The chain is Nucleoid-associated protein HPG27_32 from Helicobacter pylori (strain G27).